Reading from the N-terminus, the 862-residue chain is DNA mismatch repair protein MutS (862 aa).

603–610 contacts ATP; it reads GPNMSGKS.

This sequence belongs to the DNA mismatch repair MutS family.

Functionally, this protein is involved in the repair of mismatches in DNA. It is possible that it carries out the mismatch recognition step. This protein has a weak ATPase activity. This chain is DNA mismatch repair protein MutS, found in Bacillus velezensis (strain DSM 23117 / BGSC 10A6 / LMG 26770 / FZB42) (Bacillus amyloliquefaciens subsp. plantarum).